The primary structure comprises 505 residues: Flagellin (505 aa).

This sequence belongs to the bacterial flagellin family.

The protein localises to the secreted. The protein resides in the bacterial flagellum. In terms of biological role, flagellin is the subunit protein which polymerizes to form the filaments of bacterial flagella. This is Flagellin (fliC) from Salmonella enteritidis.